The primary structure comprises 291 residues: ATP synthase gamma chain (291 aa).

It belongs to the ATPase gamma chain family. In terms of assembly, F-type ATPases have 2 components, CF(1) - the catalytic core - and CF(0) - the membrane proton channel. CF(1) has five subunits: alpha(3), beta(3), gamma(1), delta(1), epsilon(1). CF(0) has three main subunits: a, b and c.

The protein resides in the cell inner membrane. Functionally, produces ATP from ADP in the presence of a proton gradient across the membrane. The gamma chain is believed to be important in regulating ATPase activity and the flow of protons through the CF(0) complex. The chain is ATP synthase gamma chain from Burkholderia pseudomallei (strain 1106a).